The chain runs to 249 residues: UPF0524 protein C3orf70 homolog B (249 aa).

A disordered region spans residues 174 to 230 (GPKMGHCSSPSTSEDSGINALGGHFLESCEEESEEEDELSTDGHSSPGSLWDQDECT). Positions 201-213 (SCEEESEEEDELS) are enriched in acidic residues.

Belongs to the UPF0524 family.

Functionally, plays a role in neuronal and neurobehavioral development. Required for normal expression of the postmitotic and mature neuron markers elavl3 and eno2 and neurobehaviors related to circadian rhythm and altered light-dark conditions. This Danio rerio (Zebrafish) protein is UPF0524 protein C3orf70 homolog B.